A 189-amino-acid chain; its full sequence is 3-isopropylmalate dehydratase small subunit (189 aa).

It belongs to the LeuD family. LeuD type 1 subfamily. In terms of assembly, heterodimer of LeuC and LeuD.

The enzyme catalyses (2R,3S)-3-isopropylmalate = (2S)-2-isopropylmalate. The protein operates within amino-acid biosynthesis; L-leucine biosynthesis; L-leucine from 3-methyl-2-oxobutanoate: step 2/4. Functionally, catalyzes the isomerization between 2-isopropylmalate and 3-isopropylmalate, via the formation of 2-isopropylmaleate. In Francisella tularensis subsp. holarctica (strain FTNF002-00 / FTA), this protein is 3-isopropylmalate dehydratase small subunit.